The following is a 39-amino-acid chain: Photosystem II reaction center protein L (39 aa).

A helical transmembrane segment spans residues Ser-18 to Phe-38.

This sequence belongs to the PsbL family. In terms of assembly, PSII is composed of 1 copy each of membrane proteins PsbA, PsbB, PsbC, PsbD, PsbE, PsbF, PsbH, PsbI, PsbJ, PsbK, PsbL, PsbM, PsbT, PsbX, PsbY, Psb30/Ycf12, peripheral proteins PsbO, CyanoQ (PsbQ), PsbU, PsbV and a large number of cofactors. It forms dimeric complexes.

The protein localises to the cellular thylakoid membrane. Functionally, one of the components of the core complex of photosystem II (PSII). PSII is a light-driven water:plastoquinone oxidoreductase that uses light energy to abstract electrons from H(2)O, generating O(2) and a proton gradient subsequently used for ATP formation. It consists of a core antenna complex that captures photons, and an electron transfer chain that converts photonic excitation into a charge separation. This subunit is found at the monomer-monomer interface and is required for correct PSII assembly and/or dimerization. This Prochlorococcus marinus (strain MIT 9313) protein is Photosystem II reaction center protein L.